Here is a 305-residue protein sequence, read N- to C-terminus: UPF0282 protein Pisl_0021 (305 aa).

It belongs to the UPF0282 family.

The sequence is that of UPF0282 protein Pisl_0021 from Pyrobaculum islandicum (strain DSM 4184 / JCM 9189 / GEO3).